The following is a 406-amino-acid chain: S-adenosylmethionine synthase (406 aa).

Residue histidine 17 coordinates ATP. Aspartate 19 contacts Mg(2+). Glutamate 45 contributes to the K(+) binding site. 2 residues coordinate L-methionine: glutamate 58 and glutamine 101. Positions 101–111 are flexible loop; that stretch reads QSAEINQGVAR. ATP contacts are provided by residues 178 to 180, aspartate 258, 264 to 265, alanine 281, and lysine 285; these read DGK and RK. Residue aspartate 258 participates in L-methionine binding. Lysine 289 contacts L-methionine.

It belongs to the AdoMet synthase family. In terms of assembly, homotetramer; dimer of dimers. Mg(2+) is required as a cofactor. It depends on K(+) as a cofactor.

The protein resides in the cytoplasm. The enzyme catalyses L-methionine + ATP + H2O = S-adenosyl-L-methionine + phosphate + diphosphate. It functions in the pathway amino-acid biosynthesis; S-adenosyl-L-methionine biosynthesis; S-adenosyl-L-methionine from L-methionine: step 1/1. In terms of biological role, catalyzes the formation of S-adenosylmethionine (AdoMet) from methionine and ATP. The overall synthetic reaction is composed of two sequential steps, AdoMet formation and the subsequent tripolyphosphate hydrolysis which occurs prior to release of AdoMet from the enzyme. In Bifidobacterium longum subsp. infantis (strain ATCC 15697 / DSM 20088 / JCM 1222 / NCTC 11817 / S12), this protein is S-adenosylmethionine synthase.